The sequence spans 290 residues: Ribosomal protein L11 methyltransferase (290 aa).

Thr-135, Gly-158, Asp-180, and Asn-227 together coordinate S-adenosyl-L-methionine.

The protein belongs to the methyltransferase superfamily. PrmA family.

Its subcellular location is the cytoplasm. It carries out the reaction L-lysyl-[protein] + 3 S-adenosyl-L-methionine = N(6),N(6),N(6)-trimethyl-L-lysyl-[protein] + 3 S-adenosyl-L-homocysteine + 3 H(+). Its function is as follows. Methylates ribosomal protein L11. The chain is Ribosomal protein L11 methyltransferase from Mesorhizobium japonicum (strain LMG 29417 / CECT 9101 / MAFF 303099) (Mesorhizobium loti (strain MAFF 303099)).